A 67-amino-acid polypeptide reads, in one-letter code: Ubiquinol-cytochrome c reductase complex assembly factor 6 (67 aa).

Residues 1 to 8 lie on the Mitochondrial matrix side of the membrane; it reads MPGGVPWS. The chain crosses the membrane as a helical; Signal-anchor for type II membrane protein span at residues 9 to 25; sequence AYLKMLSSSLLAMCAGA. Residues 26–67 are Mitochondrial intermembrane-facing; it reads QVVHWYYRPDLTIPEIPPKPGELKTELLGLKERRHEPHVSQQ.

Belongs to the UQCC6 family. Interacts with UQCRC1. Interacts with UQCRQ. Interacts with UQCC5. Forms a complex, named COMB/coordinator of mitochondrial CYTB biogenesis, composed of UQCC1, UQCC2, UQCC4, UQCC5 and UQCC6; stabilizes nascent cytochrome b/MT-CYB and promotes its membrane insertion. Forms a complex, named COMA, composed of UQCC1, UQCC2 and UQCC4; activates MT-CYB translation. Forms a complex, named COMC, composed of UQCC1, UQCC2; UQCC3 and UQCC4; mediates MT-CYB hemylation and association with the first nuclear-encoded complex III subunit UQCRQ. Interacts with MT-CYB. As to expression, highly expressed in brown adipose, cardiac and skeletal muscle (at protein level).

It localises to the mitochondrion inner membrane. Its function is as follows. Required for the assembly and stability of the mitochondrial ubiquinol-cytochrome c reductase complex (complex III or cytochrome b-c1 complex), a multisubunit transmembrane complex that is part of the mitochondrial electron transport chain (ETC) which drives oxidative phosphorylation. Mediates early complex III biogenesis. Participates in regulating the levels of electron transport chain proteins, and therefore energy supply, in response to changes in energy demand. Also required for cytochrome c oxidase complex (complex IV) assembly. In Mus musculus (Mouse), this protein is Ubiquinol-cytochrome c reductase complex assembly factor 6.